The following is a 142-amino-acid chain: Hemoglobin subunit alpha (142 aa).

Residues 2 to 142 (VLSGEDKSNI…VSTVLTSKYR (141 aa)) form the Globin domain. Serine 4 carries the phosphoserine modification. Lysine 8 and lysine 12 each carry N6-succinyllysine. At lysine 17 the chain carries N6-acetyllysine; alternate. Lysine 17 carries the N6-succinyllysine; alternate modification. Tyrosine 25 is subject to Phosphotyrosine. Position 36 is a phosphoserine (serine 36). Lysine 41 is subject to N6-succinyllysine. A Phosphoserine modification is found at serine 50. Histidine 59 contacts O2. A heme b-binding site is contributed by histidine 88. Serine 103 is modified (phosphoserine). Threonine 109 carries the phosphothreonine modification. A phosphoserine mark is found at serine 112, serine 125, and serine 132. A phosphothreonine mark is found at threonine 135 and threonine 138. A Phosphoserine modification is found at serine 139.

The protein belongs to the globin family. In terms of assembly, heterotetramer of two alpha chains and two beta chains. As to expression, red blood cells.

Involved in oxygen transport from the lung to the various peripheral tissues. In terms of biological role, hemopressin acts as an antagonist peptide of the cannabinoid receptor CNR1. Hemopressin-binding efficiently blocks cannabinoid receptor CNR1 and subsequent signaling. This Mus musculus (Mouse) protein is Hemoglobin subunit alpha (Hba).